A 295-amino-acid polypeptide reads, in one-letter code: Phosphatidylserine decarboxylase proenzyme (295 aa).

Residues Asp113, His169, and Ser256 each act as charge relay system; for autoendoproteolytic cleavage activity in the active site. Ser256 (schiff-base intermediate with substrate; via pyruvic acid; for decarboxylase activity) is an active-site residue. Ser256 is modified (pyruvic acid (Ser); by autocatalysis).

It belongs to the phosphatidylserine decarboxylase family. PSD-B subfamily. Prokaryotic type II sub-subfamily. As to quaternary structure, heterodimer of a large membrane-associated beta subunit and a small pyruvoyl-containing alpha subunit. It depends on pyruvate as a cofactor. In terms of processing, is synthesized initially as an inactive proenzyme. Formation of the active enzyme involves a self-maturation process in which the active site pyruvoyl group is generated from an internal serine residue via an autocatalytic post-translational modification. Two non-identical subunits are generated from the proenzyme in this reaction, and the pyruvate is formed at the N-terminus of the alpha chain, which is derived from the carboxyl end of the proenzyme. The autoendoproteolytic cleavage occurs by a canonical serine protease mechanism, in which the side chain hydroxyl group of the serine supplies its oxygen atom to form the C-terminus of the beta chain, while the remainder of the serine residue undergoes an oxidative deamination to produce ammonia and the pyruvoyl prosthetic group on the alpha chain. During this reaction, the Ser that is part of the protease active site of the proenzyme becomes the pyruvoyl prosthetic group, which constitutes an essential element of the active site of the mature decarboxylase.

It localises to the cell membrane. It carries out the reaction a 1,2-diacyl-sn-glycero-3-phospho-L-serine + H(+) = a 1,2-diacyl-sn-glycero-3-phosphoethanolamine + CO2. It functions in the pathway phospholipid metabolism; phosphatidylethanolamine biosynthesis; phosphatidylethanolamine from CDP-diacylglycerol: step 2/2. In terms of biological role, catalyzes the formation of phosphatidylethanolamine (PtdEtn) from phosphatidylserine (PtdSer). This Clostridium novyi (strain NT) protein is Phosphatidylserine decarboxylase proenzyme.